A 216-amino-acid polypeptide reads, in one-letter code: Phosphatidylserine decarboxylase proenzyme (216 aa).

The Schiff-base intermediate with substrate; via pyruvic acid role is filled by serine 182. At serine 182 the chain carries Pyruvic acid (Ser); by autocatalysis.

The protein belongs to the phosphatidylserine decarboxylase family. PSD-A subfamily. Heterodimer of a large membrane-associated beta subunit and a small pyruvoyl-containing alpha subunit. The cofactor is pyruvate. Post-translationally, is synthesized initially as an inactive proenzyme. Formation of the active enzyme involves a self-maturation process in which the active site pyruvoyl group is generated from an internal serine residue via an autocatalytic post-translational modification. Two non-identical subunits are generated from the proenzyme in this reaction, and the pyruvate is formed at the N-terminus of the alpha chain, which is derived from the carboxyl end of the proenzyme. The post-translation cleavage follows an unusual pathway, termed non-hydrolytic serinolysis, in which the side chain hydroxyl group of the serine supplies its oxygen atom to form the C-terminus of the beta chain, while the remainder of the serine residue undergoes an oxidative deamination to produce ammonia and the pyruvoyl prosthetic group on the alpha chain.

Its subcellular location is the cell membrane. It catalyses the reaction a 1,2-diacyl-sn-glycero-3-phospho-L-serine + H(+) = a 1,2-diacyl-sn-glycero-3-phosphoethanolamine + CO2. Its pathway is phospholipid metabolism; phosphatidylethanolamine biosynthesis; phosphatidylethanolamine from CDP-diacylglycerol: step 2/2. Its function is as follows. Catalyzes the formation of phosphatidylethanolamine (PtdEtn) from phosphatidylserine (PtdSer). This is Phosphatidylserine decarboxylase proenzyme from Burkholderia mallei (strain NCTC 10247).